Reading from the N-terminus, the 221-residue chain is Glycerol metabolism activator (221 aa).

A Response regulatory domain is found at 3-120 (KILIADDHPL…QMTDAIEQIL (118 aa)). Asp-55 carries the post-translational modification 4-aspartylphosphate. In terms of domain architecture, HTH luxR-type spans 149–214 (APELLQALTR…QAILSAGDID (66 aa)). The H-T-H motif DNA-binding region spans 173-192 (NKQIAYNLDIAETTVKAHVS).

Positive activator for glycerol metabolism. Regulates the expression of qedA in a positive manner and governs the expression of ADH I and ADH IIB. General regulator of quinoprotein ethanol oxidation and affects expression of ADH IIG activity but is not the sole regulator. This is Glycerol metabolism activator from Pseudomonas putida (Arthrobacter siderocapsulatus).